The chain runs to 765 residues: FHF complex subunit HOOK interacting protein 2A (765 aa).

Disordered regions lie at residues 193–236 and 532–561; these read TLKG…DHLS and TDISPENTLPNQEWLSSSPPATPDHPKNDG. Polar residues-rich tracts occupy residues 196–208 and 535–550; these read GQDSLSTDTGQSR and SPENTLPNQEWLSSSP.

The protein belongs to the FHIP family. In terms of tissue distribution, expressed in all tissues tested, highly expressed brain. Only detected at high levels in testis.

Its function is as follows. Required for proper functioning of the nervous system. This is FHF complex subunit HOOK interacting protein 2A from Homo sapiens (Human).